The primary structure comprises 336 residues: HTH-type transcriptional regulator AscG (336 aa).

An HTH lacI-type domain is found at Thr-2–Ala-56. The H-T-H motif DNA-binding region spans Met-4 to Ser-23.

In terms of biological role, repressor of the asc operon. The cryptic operon is activated by the insertion of IS186 into the ascG gene. The sequence is that of HTH-type transcriptional regulator AscG (ascG) from Escherichia coli (strain K12).